A 207-amino-acid chain; its full sequence is Superoxide dismutase [Mn] (207 aa).

The Mn(2+) site is built by histidine 28, histidine 76, aspartate 160, and histidine 164.

It belongs to the iron/manganese superoxide dismutase family. Requires Mn(2+) as cofactor.

It carries out the reaction 2 superoxide + 2 H(+) = H2O2 + O2. Destroys superoxide anion radicals which are normally produced within the cells and which are toxic to biological systems. The sequence is that of Superoxide dismutase [Mn] (sodA) from Mycolicibacterium fortuitum (Mycobacterium fortuitum).